The sequence spans 1069 residues: Structural polyprotein (1069 aa).

Asp28 is a binding site for a divalent metal cation. The segment at 504 to 534 (THPKLVPPTEREPNSTPDGHKITGAKTKDNT) is disordered. A compositionally biased stretch (basic and acidic residues) spans 512–534 (TEREPNSTPDGHKITGAKTKDNT). The Peptidase S50 domain maps to 558–791 (ADLPISLLQT…AFQGWFYCGA (234 aa)). The Nucleophile role is filled by Ser692. Residue Lys729 is part of the active site. Disordered stretches follow at residues 876–900 (LPHEGSKSQRRKHGPAPESRESTRM) and 1031–1069 (SGAAATFKPRNRRPAQEYQPRPPITSRAGRFLNISTTLS).

Homotrimer. A central divalent metal stabilizes the VP2 trimer. As to quaternary structure, homodimer. Interacts (via C-terminus) with VP1 in the cytoplasm. Interacts with VP2. Post-translationally, specific enzymatic cleavages yield mature proteins. The capsid assembly seems to be regulated by polyprotein processing. The protease VP4 cleaves itself off the polyprotein, thus releasing pre-VP2 and VP3 within the infected cell. During capsid assembly, the C-terminus of pre-VP2 is further processed by VP4, giving rise to VP2, the external capsid protein and three small peptides that all stay closely associated with the capsid. In terms of processing, the N-termini of VP2 and VP3 are blocked.

The protein localises to the virion. The protein resides in the host cytoplasm. In terms of biological role, capsid protein VP2 self assembles to form an icosahedral capsid with a T=13 symmetry, about 70 nm in diameter, and consisting of 260 VP2 trimers. The capsid encapsulates the genomic dsRNA. VP2 is also involved in attachment and entry into the host cell. Its function is as follows. The precursor of VP2 plays an important role in capsid assembly. First, pre-VP2 and VP2 oligomers assemble to form a procapsid. Then, the pre-VP2 intermediates may be processed into VP2 proteins by proteolytic cleavage mediated by VP4 to obtain the mature virion. The final capsid is composed of pentamers and hexamers but VP2 has a natural tendency to assemble into all-pentameric structures. Therefore pre-VP2 may be required to allow formation of the hexameric structures. Protease VP4 is a serine protease that cleaves the polyprotein into its final products. Pre-VP2 is first partially cleaved, and may be completely processed by VP4 upon capsid maturation. Functionally, capsid protein VP3 plays a key role in virion assembly by providing a scaffold for the capsid made of VP2. May self-assemble to form a T=4-like icosahedral inner-capsid composed of at least 180 trimers. Plays a role in genomic RNA packaging by recruiting VP1 into the capsid and interacting with the dsRNA genome segments to form a ribonucleoprotein complex. Additionally, the interaction of the VP3 C-terminal tail with VP1 removes the inherent structural blockade of the polymerase active site. Thus, VP3 can also function as a transcriptional activator. In terms of biological role, structural peptide 1 is a small peptide derived from pre-VP2 C-terminus. It destabilizes and perforates cell membranes, suggesting a role during entry. Its function is as follows. Structural peptide 2 is a small peptide derived from pre-VP2 C-terminus. It is not essential for the virus viability, but viral growth is affected when missing. Structural peptide 3 is a small peptide derived from pre-VP2 C-terminus. It is not essential for the virus viability, but viral growth is affected when missing. Functionally, structural peptide 4 is a small peptide derived from pre-VP2 C-terminus. It is essential for the virus viability. The sequence is that of Structural polyprotein from Channa lucius (Forest snakehead).